An 89-amino-acid polypeptide reads, in one-letter code: Arminin 7519 (89 aa).

Positions 1–18 (MRSTFAVLFLALIALTYS) are cleaved as a signal peptide. The propeptide occupies 19 to 59 (KNYQDVKEEIKNEVENEILRDLGEDDDELDDNAQEAVNDAR). Residue Ala-86 is modified to Alanine amide.

The protein belongs to the arminin family. As to expression, expressed in entodermal epithelium along the body column.

Its subcellular location is the secreted. It localises to the target cell membrane. In terms of biological role, antimicrobial peptide with a broad-spectrum antimicrobial activity. Keeps its antibacterial activity under a wide range of salt concentrations that mimic physiological conditions of human blood, which is surprising, since Hydra is an obligate freshwater animal with nearly no salt tolerance. Does not affect red blood cells. The chain is Arminin 7519 from Hydra vulgaris (Hydra).